The chain runs to 104 residues: Ribonuclease P protein component 4 (104 aa).

Cys57, Cys60, Cys83, and Cys86 together coordinate Zn(2+).

This sequence belongs to the eukaryotic/archaeal RNase P protein component 4 family. As to quaternary structure, consists of a catalytic RNA component and at least 4-5 protein subunits. Requires Zn(2+) as cofactor.

It localises to the cytoplasm. The enzyme catalyses Endonucleolytic cleavage of RNA, removing 5'-extranucleotides from tRNA precursor.. Its function is as follows. Part of ribonuclease P, a protein complex that generates mature tRNA molecules by cleaving their 5'-ends. The polypeptide is Ribonuclease P protein component 4 (Saccharolobus islandicus (strain L.S.2.15 / Lassen #1) (Sulfolobus islandicus)).